A 63-amino-acid chain; its full sequence is Cytochrome c oxidase subunit 7C, mitochondrial (63 aa).

A mitochondrion-targeting transit peptide spans 1-16 (MLGQSIRRFTTSVVRR). Over 17-34 (SHYEEGPGKNLPFSVENK) the chain is Mitochondrial matrix. Lys25 carries the post-translational modification N6-acetyllysine; alternate. N6-succinyllysine; alternate is present on Lys25. A helical transmembrane segment spans residues 35–57 (WRLLAMMTVYFGSGFAAPFFIVR). The Mitochondrial intermembrane segment spans residues 58-63 (HQLLKK).

This sequence belongs to the cytochrome c oxidase VIIc family. Component of the cytochrome c oxidase (complex IV, CIV), a multisubunit enzyme composed of 14 subunits. The complex is composed of a catalytic core of 3 subunits MT-CO1, MT-CO2 and MT-CO3, encoded in the mitochondrial DNA, and 11 supernumerary subunits COX4I, COX5A, COX5B, COX6A, COX6B, COX6C, COX7A, COX7B, COX7C, COX8 and NDUFA4, which are encoded in the nuclear genome. The complex exists as a monomer or a dimer and forms supercomplexes (SCs) in the inner mitochondrial membrane with NADH-ubiquinone oxidoreductase (complex I, CI) and ubiquinol-cytochrome c oxidoreductase (cytochrome b-c1 complex, complex III, CIII), resulting in different assemblies (supercomplex SCI(1)III(2)IV(1) and megacomplex MCI(2)III(2)IV(2)). Interacts with RAB5IF.

The protein resides in the mitochondrion inner membrane. Its pathway is energy metabolism; oxidative phosphorylation. Component of the cytochrome c oxidase, the last enzyme in the mitochondrial electron transport chain which drives oxidative phosphorylation. The respiratory chain contains 3 multisubunit complexes succinate dehydrogenase (complex II, CII), ubiquinol-cytochrome c oxidoreductase (cytochrome b-c1 complex, complex III, CIII) and cytochrome c oxidase (complex IV, CIV), that cooperate to transfer electrons derived from NADH and succinate to molecular oxygen, creating an electrochemical gradient over the inner membrane that drives transmembrane transport and the ATP synthase. Cytochrome c oxidase is the component of the respiratory chain that catalyzes the reduction of oxygen to water. Electrons originating from reduced cytochrome c in the intermembrane space (IMS) are transferred via the dinuclear copper A center (CU(A)) of subunit 2 and heme A of subunit 1 to the active site in subunit 1, a binuclear center (BNC) formed by heme A3 and copper B (CU(B)). The BNC reduces molecular oxygen to 2 water molecules using 4 electrons from cytochrome c in the IMS and 4 protons from the mitochondrial matrix. This is Cytochrome c oxidase subunit 7C, mitochondrial (Cox7c) from Mus musculus (Mouse).